The chain runs to 967 residues: RNA polymerase-associated protein RapA (967 aa).

The Helicase ATP-binding domain maps to 163 to 332 (EVGRRHAPRV…FARLRLLDPD (170 aa)). 176 to 183 (DEVGLGKT) is a binding site for ATP. The DEAH box motif lies at 278 to 281 (DEAH). Positions 491 to 639 (RVDWLIDFLK…LCAFELTCPG (149 aa)) constitute a Helicase C-terminal domain.

Belongs to the SNF2/RAD54 helicase family. RapA subfamily. In terms of assembly, interacts with the RNAP. Has a higher affinity for the core RNAP than for the holoenzyme. Its ATPase activity is stimulated by binding to RNAP.

In terms of biological role, transcription regulator that activates transcription by stimulating RNA polymerase (RNAP) recycling in case of stress conditions such as supercoiled DNA or high salt concentrations. Probably acts by releasing the RNAP, when it is trapped or immobilized on tightly supercoiled DNA. Does not activate transcription on linear DNA. Probably not involved in DNA repair. This Shewanella amazonensis (strain ATCC BAA-1098 / SB2B) protein is RNA polymerase-associated protein RapA.